The chain runs to 1182 residues: Tyrosine-protein kinase ABL2 (1182 aa).

Residues 1–42 (MGQQVGRVGEAPGLQQPQPRGIRGSSAARPSGRRRDPAGRTA) are disordered. Glycine 2 is lipidated: N-myristoyl glycine. Residues 2 to 106 (GQQVGRVGEA…SKENLLGATE (105 aa)) are CAP. A compositionally biased stretch (low complexity) spans 20 to 30 (RGIRGSSAARP). Position 97 is a phosphoserine (serine 97). The 61-residue stretch at 107-167 (SDPNLFVALY…PSNYITPVNS (61 aa)) folds into the SH3 domain. Phosphotyrosine occurs at positions 116, 161, 174, 185, 218, and 231. One can recognise an SH2 domain in the interval 173–263 (WYHGPVSRSA…GLVTTLHYPA (91 aa)). Tyrosine 261 is subject to Phosphotyrosine; by ABL1 and autocatalysis. Phosphotyrosine; by autocatalysis is present on tyrosine 272. Serine 275 carries the post-translational modification Phosphoserine. The region spanning 288–539 (ITMKHKLGGG…PSFAETHQAF (252 aa)) is the Protein kinase domain. 294–302 (LGGGQYGEV) lines the ATP pocket. Phosphotyrosine occurs at positions 299 and 303. Residues lysine 317 and 362-368 (EYMPYGN) each bind ATP. Residue aspartate 409 is the Proton acceptor of the active site. Positions 427–451 (DFGLSRLMTGDTYTAHAGAKFPIKW) match the Kinase activation loop motif. Tyrosine 439 carries the phosphotyrosine; by autocatalysis and SRC-type Tyr-kinases modification. Tyrosine 459 is modified (phosphotyrosine). Tyrosine 568 carries the post-translational modification Phosphotyrosine; by autocatalysis. A phosphoserine mark is found at serine 606, serine 621, serine 632, serine 634, and serine 656. Disordered stretches follow at residues 612-642 (IRST…DAKE) and 655-674 (SSFM…SSFR). Residues 659 to 661 (KKR) carry the Nuclear localization signal motif. Phosphoserine occurs at positions 670, 671, and 672. Tyrosine 684 is modified (phosphotyrosine; by autocatalysis). The interval 695–930 (SLQNADGFSV…AVLPTTHNHK (236 aa)) is F-actin-binding. Tyrosine 719 is subject to Phosphotyrosine. The interval 765-796 (LRAGKPTASDDTSKPFPRSNSTSSMSSGLPEQ) is disordered. The residue at position 778 (lysine 778) is an N6-acetyllysine. Polar residues predominate over residues 782 to 793 (RSNSTSSMSSGL). The residue at position 785 (serine 785) is a Phosphoserine. Threonine 802 is modified (phosphothreonine). Over residues 809 to 825 (RSKLQLERTVSTSSQPE) the composition is skewed to polar residues. Positions 809–858 (RSKLQLERTVSTSSQPEENVDRANDMLPKKSEEGAAPARERPKAKLLPRG) are disordered. A phosphoserine mark is found at serine 819 and serine 822. A compositionally biased stretch (basic and acidic residues) spans 827–851 (NVDRANDMLPKKSEEGAAPARERPK). Phosphoserine occurs at positions 915 and 936. Positions 964–1059 (HQVTSSGDKD…TSSISPAKMA (96 aa)) are disordered. An F-actin-binding region spans residues 1020–1182 (EGGKKAAPGP…VQEISDVVQR (163 aa)).

This sequence belongs to the protein kinase superfamily. Tyr protein kinase family. ABL subfamily. As to quaternary structure, interacts with PSMA7. Interacts with CTTN. Found in a complex with ABL1, ABL2, CRK and UNC119; leading to the inhibition of CRK phosphorylation by ABL kinases. The cofactor is Mg(2+). Mn(2+) serves as cofactor. In terms of processing, phosphorylated at Tyr-261 by ABL1 in response to oxidative stress. Phosphorylated by PDGFRB. Polyubiquitinated. Polyubiquitination of ABL2 leads to degradation. In terms of tissue distribution, most abundant in adult mouse brain, especially in synapse-rich regions.

The protein localises to the cytoplasm. It is found in the cytoskeleton. It carries out the reaction L-tyrosyl-[protein] + ATP = O-phospho-L-tyrosyl-[protein] + ADP + H(+). Stabilized in the inactive form by an association between the SH3 domain and the SH2-TK linker region, interactions of the N-terminal cap, and contributions from an N-terminal myristoyl group and phospholipids. Activated by autophosphorylation as well as by SRC-family kinase-mediated phosphorylation. Activated by RIN1 binding to the SH2 and SH3 domains. Inhibited by imatinib mesylate (Gleevec). Phosphatidylinositol 4,5-bisphosphate (PIP2), a highly abundant phosphoinositide known to regulate cytoskeletal and membrane proteins, inhibits the tyrosine kinase activity. In terms of biological role, non-receptor tyrosine-protein kinase that plays an ABL1-overlapping role in key processes linked to cell growth and survival such as cytoskeleton remodeling in response to extracellular stimuli, cell motility and adhesion, receptor endocytosis, autophagy, DNA damage response and apoptosis. Coordinates actin remodeling through tyrosine phosphorylation of proteins controlling cytoskeleton dynamics like MYH10 (involved in movement); CTTN (involved in signaling); or TUBA1 and TUBB (microtubule subunits). Binds directly F-actin and regulates actin cytoskeletal structure through its F-actin-bundling activity. Involved in the regulation of cell adhesion and motility through phosphorylation of key regulators of these processes such as CRK, CRKL or DOK1. Required for adhesion-dependent phosphorylation of ARHGAP35 which promotes its association with RASA1, resulting in recruitment of ARHGAP35 to the cell periphery where it inhibits RHO. Phosphorylates multiple receptor tyrosine kinases like PDGFRB and other substrates which are involved in endocytosis regulation such as RIN1. In brain, may regulate neurotransmission by phosphorylating proteins at the synapse. Finally, functions as its own regulator through autocatalytic activity as well as through phosphorylation of its inhibitor, ABI1. Positively regulates chemokine-mediated T-cell migration, polarization, and homing to lymph nodes and immune-challenged tissues, potentially via activation of NEDD9/HEF1 and RAP1. This Mus musculus (Mouse) protein is Tyrosine-protein kinase ABL2.